The sequence spans 312 residues: MGMKRKKISIIGAGFTGATTAFILAQKELGDIVLVDIPQLENPTKGKALDMLESSPVLGFDANIIGTSDYADTADSDVVVITAGIARKPGMSRDDLVTTNQGIMKAVTKEVVKYSPNCFIIVLTNPVDAMTYTVFKESGFPKNRVIGQSGVLDTARFRTFVAQELNLSVKDITGFVLGGHGDDMVPLVRYSYAGGIPLETLIPKERLDAIVERTRKGGGEIVNLLGNGSAYYAPAASLAEMVEAIVKDQRRVLPAIAYLEGEYGYEGIYLGVPTILGGNGIEKVIELELTEEEKAALAKSVESVKNVMKVLQ.

Residues 12–17 (GAGFTG) and aspartate 36 contribute to the NAD(+) site. Positions 87 and 93 each coordinate substrate. NAD(+) is bound by residues asparagine 100 and 123–125 (LTN). Asparagine 125 is a binding site for substrate. Position 149 is a phosphoserine (serine 149). A substrate-binding site is contributed by arginine 156. The Proton acceptor role is filled by histidine 180.

It belongs to the LDH/MDH superfamily. MDH type 3 family.

The catalysed reaction is (S)-malate + NAD(+) = oxaloacetate + NADH + H(+). Functionally, catalyzes the reversible oxidation of malate to oxaloacetate. The protein is Malate dehydrogenase of Anoxybacillus flavithermus (strain DSM 21510 / WK1).